We begin with the raw amino-acid sequence, 400 residues long: Enoyl-[acyl-carrier-protein] reductase [NADH] (400 aa).

NAD(+) contacts are provided by residues 48-53 (GSSSGY), 74-75 (FE), 111-112 (DA), and 139-140 (LA). A substrate-binding site is contributed by Tyr-225. The active-site Proton donor is the Tyr-235. NAD(+) contacts are provided by residues Lys-244 and 273 to 275 (VVT).

It belongs to the TER reductase family. As to quaternary structure, monomer.

It catalyses the reaction a 2,3-saturated acyl-[ACP] + NAD(+) = a (2E)-enoyl-[ACP] + NADH + H(+). The protein operates within lipid metabolism; fatty acid biosynthesis. Involved in the final reduction of the elongation cycle of fatty acid synthesis (FAS II). Catalyzes the reduction of a carbon-carbon double bond in an enoyl moiety that is covalently linked to an acyl carrier protein (ACP). The chain is Enoyl-[acyl-carrier-protein] reductase [NADH] from Shewanella denitrificans (strain OS217 / ATCC BAA-1090 / DSM 15013).